Consider the following 328-residue polypeptide: UPF0285 protein Mevan_1551 (328 aa).

It belongs to the UPF0285 family.

The polypeptide is UPF0285 protein Mevan_1551 (Methanococcus vannielii (strain ATCC 35089 / DSM 1224 / JCM 13029 / OCM 148 / SB)).